Consider the following 139-residue polypeptide: D-ribose pyranase (139 aa).

His-20 serves as the catalytic Proton donor. Residues Asp-28, His-106, and Tyr-128–Asn-130 contribute to the substrate site.

This sequence belongs to the RbsD / FucU family. RbsD subfamily. In terms of assembly, homodecamer.

Its subcellular location is the cytoplasm. It carries out the reaction beta-D-ribopyranose = beta-D-ribofuranose. The protein operates within carbohydrate metabolism; D-ribose degradation; D-ribose 5-phosphate from beta-D-ribopyranose: step 1/2. Functionally, catalyzes the interconversion of beta-pyran and beta-furan forms of D-ribose. This is D-ribose pyranase from Vibrio cholerae serotype O1 (strain ATCC 39541 / Classical Ogawa 395 / O395).